The sequence spans 707 residues: Polyribonucleotide nucleotidyltransferase (707 aa).

The Mg(2+) site is built by Asp484 and Asp490. The KH domain maps to 551–610; sequence PRVVRMVVNPEKIRDIIGPAGKTITKIISETGVKIDIEEDGRLYITAPNLEAGERAKQMI. Residues 620–688 form the S1 motif domain; the sequence is GGIYLGKVLR…KLGRIVLSRK (69 aa). Residues 688 to 707 form a disordered region; sequence KDAMPDEEESDNRKSDNRKK. Residues 698-707 are compositionally biased toward basic and acidic residues; sequence DNRKSDNRKK.

Belongs to the polyribonucleotide nucleotidyltransferase family. It depends on Mg(2+) as a cofactor.

Its subcellular location is the cytoplasm. It carries out the reaction RNA(n+1) + phosphate = RNA(n) + a ribonucleoside 5'-diphosphate. Involved in mRNA degradation. Catalyzes the phosphorolysis of single-stranded polyribonucleotides processively in the 3'- to 5'-direction. This is Polyribonucleotide nucleotidyltransferase from Caldanaerobacter subterraneus subsp. tengcongensis (strain DSM 15242 / JCM 11007 / NBRC 100824 / MB4) (Thermoanaerobacter tengcongensis).